Here is a 388-residue protein sequence, read N- to C-terminus: Succinate--CoA ligase [ADP-forming] subunit beta (388 aa).

The ATP-grasp domain maps to 9–244 (KQLFAEYGLP…PSQEDSREAE (236 aa)). Residues Lys46, 53 to 55 (GRG), Glu99, Thr102, and Glu107 each bind ATP. 2 residues coordinate Mg(2+): Asn199 and Asp213. Substrate-binding positions include Asn264 and 321–323 (GIV).

The protein belongs to the succinate/malate CoA ligase beta subunit family. Heterotetramer of two alpha and two beta subunits. It depends on Mg(2+) as a cofactor.

The enzyme catalyses succinate + ATP + CoA = succinyl-CoA + ADP + phosphate. The catalysed reaction is GTP + succinate + CoA = succinyl-CoA + GDP + phosphate. Its pathway is carbohydrate metabolism; tricarboxylic acid cycle; succinate from succinyl-CoA (ligase route): step 1/1. Functionally, succinyl-CoA synthetase functions in the citric acid cycle (TCA), coupling the hydrolysis of succinyl-CoA to the synthesis of either ATP or GTP and thus represents the only step of substrate-level phosphorylation in the TCA. The beta subunit provides nucleotide specificity of the enzyme and binds the substrate succinate, while the binding sites for coenzyme A and phosphate are found in the alpha subunit. The sequence is that of Succinate--CoA ligase [ADP-forming] subunit beta from Marinobacter nauticus (strain ATCC 700491 / DSM 11845 / VT8) (Marinobacter aquaeolei).